A 236-amino-acid chain; its full sequence is Pyridoxine 5'-phosphate synthase (236 aa).

Asn6 provides a ligand contact to 3-amino-2-oxopropyl phosphate. 8–9 (DH) contacts 1-deoxy-D-xylulose 5-phosphate. Arg17 is a binding site for 3-amino-2-oxopropyl phosphate. The Proton acceptor role is filled by His42. Positions 44 and 49 each coordinate 1-deoxy-D-xylulose 5-phosphate. The active-site Proton acceptor is Glu69. 1-deoxy-D-xylulose 5-phosphate is bound at residue Thr99. The Proton donor role is filled by His190. Residues Gly191 and 212 to 213 (GH) each bind 3-amino-2-oxopropyl phosphate.

This sequence belongs to the PNP synthase family. Homooctamer; tetramer of dimers.

It localises to the cytoplasm. The enzyme catalyses 3-amino-2-oxopropyl phosphate + 1-deoxy-D-xylulose 5-phosphate = pyridoxine 5'-phosphate + phosphate + 2 H2O + H(+). It participates in cofactor biosynthesis; pyridoxine 5'-phosphate biosynthesis; pyridoxine 5'-phosphate from D-erythrose 4-phosphate: step 5/5. Functionally, catalyzes the complicated ring closure reaction between the two acyclic compounds 1-deoxy-D-xylulose-5-phosphate (DXP) and 3-amino-2-oxopropyl phosphate (1-amino-acetone-3-phosphate or AAP) to form pyridoxine 5'-phosphate (PNP) and inorganic phosphate. This is Pyridoxine 5'-phosphate synthase from Chlorobium phaeobacteroides (strain DSM 266 / SMG 266 / 2430).